Here is a 312-residue protein sequence, read N- to C-terminus: Porphobilinogen deaminase (312 aa).

At Cys-241 the chain carries S-(dipyrrolylmethanemethyl)cysteine.

This sequence belongs to the HMBS family. In terms of assembly, monomer. It depends on dipyrromethane as a cofactor.

The enzyme catalyses 4 porphobilinogen + H2O = hydroxymethylbilane + 4 NH4(+). The protein operates within porphyrin-containing compound metabolism; protoporphyrin-IX biosynthesis; coproporphyrinogen-III from 5-aminolevulinate: step 2/4. Its function is as follows. Tetrapolymerization of the monopyrrole PBG into the hydroxymethylbilane pre-uroporphyrinogen in several discrete steps. The polypeptide is Porphobilinogen deaminase (Cytophaga hutchinsonii (strain ATCC 33406 / DSM 1761 / CIP 103989 / NBRC 15051 / NCIMB 9469 / D465)).